Here is a 349-residue protein sequence, read N- to C-terminus: MENIETILRLAEEKILLVQNLKELQEYKVEFLGKNGIVTGELKKLGSLNEQERKEFGLKINKLKDKIQNIIKAKEEILEEQELNLKLAADKIDLTIPARRYKQGSIHPITQCSEELIQVFSQFGFTIENGPNIENDFHNFTSLNFEDDHPARQMHDTFYLKGQENNKPLLLRTHTSTVQIRAMKNGKPPFRFIAPGRTYRSDSDMTHTPMFHQIEGLVIDKNINMGHLKYVITEFIKSFFENSNIELRFRPSFFPFTEPSAEVDIRMNKNDKWLEVLGCGMVHPNVLKNVGIDSSEYQGFAFGLGVERFAMLKYNIKDLRQFFEGDMRWLKHYNFGSFDIPNLAGGLTK.

Glu-258 serves as a coordination point for Mg(2+).

It belongs to the class-II aminoacyl-tRNA synthetase family. Phe-tRNA synthetase alpha subunit type 1 subfamily. As to quaternary structure, tetramer of two alpha and two beta subunits. Mg(2+) serves as cofactor.

Its subcellular location is the cytoplasm. The catalysed reaction is tRNA(Phe) + L-phenylalanine + ATP = L-phenylalanyl-tRNA(Phe) + AMP + diphosphate + H(+). In Rickettsia felis (strain ATCC VR-1525 / URRWXCal2) (Rickettsia azadi), this protein is Phenylalanine--tRNA ligase alpha subunit.